Reading from the N-terminus, the 242-residue chain is uncharacterized protein (242 aa).

This is an uncharacterized protein from Acanthamoeba polyphaga mimivirus (APMV).